A 139-amino-acid polypeptide reads, in one-letter code: MLMPKRVKYRKTQRGRMKGNAGRGTSVAFGSFGLKAIEPAWITSRQIEAARVAMNRYMKRDGKIWIRIFPDKPVSKKAAETRMGSGKGSPEFWVAVVKPGRIMFEADGVPMEVATEAFRLAAKKLPIKTRFIVRPDYEA.

Belongs to the universal ribosomal protein uL16 family. In terms of assembly, part of the 50S ribosomal subunit.

In terms of biological role, binds 23S rRNA and is also seen to make contacts with the A and possibly P site tRNAs. The protein is Large ribosomal subunit protein uL16 of Chlorobium luteolum (strain DSM 273 / BCRC 81028 / 2530) (Pelodictyon luteolum).